The following is a 215-amino-acid chain: Large ribosomal subunit protein uL3 (215 aa).

The segment at 134 to 166 is disordered; the sequence is MAHGSKNHRAPGSIGAGTTPGRVFPGKRMPGRM.

This sequence belongs to the universal ribosomal protein uL3 family. In terms of assembly, part of the 50S ribosomal subunit. Forms a cluster with proteins L14 and L19.

Its function is as follows. One of the primary rRNA binding proteins, it binds directly near the 3'-end of the 23S rRNA, where it nucleates assembly of the 50S subunit. This chain is Large ribosomal subunit protein uL3, found in Gloeobacter violaceus (strain ATCC 29082 / PCC 7421).